Reading from the N-terminus, the 118-residue chain is Holo-[acyl-carrier-protein] synthase (118 aa).

Residues D8 and E58 each contribute to the Mg(2+) site.

It belongs to the P-Pant transferase superfamily. AcpS family. Mg(2+) is required as a cofactor.

Its subcellular location is the cytoplasm. The catalysed reaction is apo-[ACP] + CoA = holo-[ACP] + adenosine 3',5'-bisphosphate + H(+). Transfers the 4'-phosphopantetheine moiety from coenzyme A to a Ser of acyl-carrier-protein. The sequence is that of Holo-[acyl-carrier-protein] synthase from Streptococcus uberis (strain ATCC BAA-854 / 0140J).